Reading from the N-terminus, the 375-residue chain is Holliday junction branch migration complex subunit RuvB (375 aa).

Positions Met1–Lys22 are enriched in polar residues. Residues Met1 to Ala44 are disordered. Residues Asp13–Tyr218 form a large ATPase domain (RuvB-L) region. ATP is bound by residues Leu57, Arg58, Gly99, Lys102, Thr103, Thr104, Glu165 to Phe167, Arg208, Tyr218, and Arg255. Thr103 serves as a coordination point for Mg(2+). Residues Glu219–Asn289 form a small ATPAse domain (RuvB-S) region. The tract at residues Pro292–Ser375 is head domain (RuvB-H). DNA contacts are provided by Arg347 and Arg352.

Belongs to the RuvB family. Homohexamer. Forms an RuvA(8)-RuvB(12)-Holliday junction (HJ) complex. HJ DNA is sandwiched between 2 RuvA tetramers; dsDNA enters through RuvA and exits via RuvB. An RuvB hexamer assembles on each DNA strand where it exits the tetramer. Each RuvB hexamer is contacted by two RuvA subunits (via domain III) on 2 adjacent RuvB subunits; this complex drives branch migration. In the full resolvosome a probable DNA-RuvA(4)-RuvB(12)-RuvC(2) complex forms which resolves the HJ.

The protein localises to the cytoplasm. The catalysed reaction is ATP + H2O = ADP + phosphate + H(+). Its function is as follows. The RuvA-RuvB-RuvC complex processes Holliday junction (HJ) DNA during genetic recombination and DNA repair, while the RuvA-RuvB complex plays an important role in the rescue of blocked DNA replication forks via replication fork reversal (RFR). RuvA specifically binds to HJ cruciform DNA, conferring on it an open structure. The RuvB hexamer acts as an ATP-dependent pump, pulling dsDNA into and through the RuvAB complex. RuvB forms 2 homohexamers on either side of HJ DNA bound by 1 or 2 RuvA tetramers; 4 subunits per hexamer contact DNA at a time. Coordinated motions by a converter formed by DNA-disengaged RuvB subunits stimulates ATP hydrolysis and nucleotide exchange. Immobilization of the converter enables RuvB to convert the ATP-contained energy into a lever motion, pulling 2 nucleotides of DNA out of the RuvA tetramer per ATP hydrolyzed, thus driving DNA branch migration. The RuvB motors rotate together with the DNA substrate, which together with the progressing nucleotide cycle form the mechanistic basis for DNA recombination by continuous HJ branch migration. Branch migration allows RuvC to scan DNA until it finds its consensus sequence, where it cleaves and resolves cruciform DNA. This is Holliday junction branch migration complex subunit RuvB from Acaryochloris marina (strain MBIC 11017).